The sequence spans 89 residues: Translation initiation factor IF-1, chloroplastic (89 aa).

The S1-like domain maps to methionine 1 to arginine 72.

This sequence belongs to the IF-1 family. As to quaternary structure, component of the 30S ribosomal translation pre-initiation complex which assembles on the 30S ribosome in the order IF-2 and IF-3, IF-1 and N-formylmethionyl-tRNA(fMet); mRNA recruitment can occur at any time during PIC assembly.

Its subcellular location is the plastid. It localises to the chloroplast. One of the essential components for the initiation of protein synthesis. Stabilizes the binding of IF-2 and IF-3 on the 30S subunit to which N-formylmethionyl-tRNA(fMet) subsequently binds. Helps modulate mRNA selection, yielding the 30S pre-initiation complex (PIC). Upon addition of the 50S ribosomal subunit IF-1, IF-2 and IF-3 are released leaving the mature 70S translation initiation complex. The chain is Translation initiation factor IF-1, chloroplastic from Angiopteris evecta (Mule's foot fern).